Reading from the N-terminus, the 152-residue chain is Protein Smg homolog (152 aa).

Belongs to the Smg family.

The chain is Protein Smg homolog from Nitrosomonas europaea (strain ATCC 19718 / CIP 103999 / KCTC 2705 / NBRC 14298).